Reading from the N-terminus, the 86-residue chain is Large ribosomal subunit protein bL31 (86 aa).

Residues 66 to 86 form a disordered region; sequence GMGSADSATSQETKEAKESDK. A compositionally biased stretch (basic and acidic residues) spans 77–86; it reads ETKEAKESDK.

Belongs to the bacterial ribosomal protein bL31 family. Type A subfamily. Part of the 50S ribosomal subunit.

Its function is as follows. Binds the 23S rRNA. The chain is Large ribosomal subunit protein bL31 from Prochlorococcus marinus (strain MIT 9515).